The following is a 328-amino-acid chain: NAD(P)H-dependent pentose reductase (328 aa).

Tyr-50 acts as the Proton donor in catalysis. His-112 contacts substrate. NAD(+)-binding positions include 174-175 (AN), 223-232 (SSFGPQSFVE), and 279-289 (KSNNVDRLKQN).

It belongs to the aldo/keto reductase family.

In terms of biological role, pentose reductase with a broad substrate affinity involved in pentose catabolism. Has highest reductase activities with L-arabinose and D-xylose as substrates, and displays much lower activities with D-ribose, D-galactose and D-glucose. Has highest dehydrogenase activity with L-arabitol as substrate, followed by xylitol and D-sorbitol. May be responsible for the first step of the L-arabinose catabolic pathway. The sequence is that of NAD(P)H-dependent pentose reductase (PRD1) from Pyricularia oryzae (strain 70-15 / ATCC MYA-4617 / FGSC 8958) (Rice blast fungus).